Consider the following 172-residue polypeptide: Ribosome maturation factor RimM (172 aa).

The PRC barrel domain maps to 95–168 (AEGEFYYHQI…RVDVEIMEGL (74 aa)).

The protein belongs to the RimM family. In terms of assembly, binds ribosomal protein uS19.

Its subcellular location is the cytoplasm. In terms of biological role, an accessory protein needed during the final step in the assembly of 30S ribosomal subunit, possibly for assembly of the head region. Essential for efficient processing of 16S rRNA. May be needed both before and after RbfA during the maturation of 16S rRNA. It has affinity for free ribosomal 30S subunits but not for 70S ribosomes. The chain is Ribosome maturation factor RimM from Streptococcus equi subsp. zooepidemicus (strain H70).